The following is a 576-amino-acid chain: V-type ATP synthase alpha chain (576 aa).

Position 238–245 (238–245 (GPFGAGKT)) interacts with ATP.

This sequence belongs to the ATPase alpha/beta chains family.

It carries out the reaction ATP + H2O + 4 H(+)(in) = ADP + phosphate + 5 H(+)(out). Produces ATP from ADP in the presence of a proton gradient across the membrane. The V-type alpha chain is a catalytic subunit. In Borrelia turicatae (strain 91E135), this protein is V-type ATP synthase alpha chain.